The following is a 242-amino-acid chain: 1-(5-phosphoribosyl)-5-[(5-phosphoribosylamino)methylideneamino] imidazole-4-carboxamide isomerase (242 aa).

Asp-10 functions as the Proton acceptor in the catalytic mechanism. The active-site Proton donor is Asp-132.

The protein belongs to the HisA/HisF family.

It localises to the cytoplasm. It carries out the reaction 1-(5-phospho-beta-D-ribosyl)-5-[(5-phospho-beta-D-ribosylamino)methylideneamino]imidazole-4-carboxamide = 5-[(5-phospho-1-deoxy-D-ribulos-1-ylimino)methylamino]-1-(5-phospho-beta-D-ribosyl)imidazole-4-carboxamide. The protein operates within amino-acid biosynthesis; L-histidine biosynthesis; L-histidine from 5-phospho-alpha-D-ribose 1-diphosphate: step 4/9. The polypeptide is 1-(5-phosphoribosyl)-5-[(5-phosphoribosylamino)methylideneamino] imidazole-4-carboxamide isomerase (Methanopyrus kandleri (strain AV19 / DSM 6324 / JCM 9639 / NBRC 100938)).